The chain runs to 136 residues: HetP-like commitment protein Alr2902 (136 aa).

The span at Lys-94–Leu-109 shows a compositional bias: polar residues. The disordered stretch occupies residues Lys-94 to Ile-120.

The protein belongs to the HetP family. In terms of assembly, in bacterial two-hybrid assays interacts robustly with HetR and Alr3234 and weakly with itself, HetP and Asl1930.

Its function is as follows. Delays heterocyst differentiation and commitment when nitrogen is limiting. Interplay between the 4 HetP paralogs controls the timing of commitment to heterocyst formation and its duration. Epistatic analysis show that the 3 paralogs act upstream of hetP to delay commitment (asl1930, alr3234) or inhibit development (alr2902). Asl1930 and Alr3234 must also attenuate the activity of Alr2902. When only this homolog is present no heterocysts are formed, showing it inhibits development. Ectopic expression partially complements a hetP deletion. The sequence is that of HetP-like commitment protein Alr2902 from Nostoc sp. (strain PCC 7120 / SAG 25.82 / UTEX 2576).